Reading from the N-terminus, the 76-residue chain is Sec-independent protein translocase protein TatA (76 aa).

The chain crosses the membrane as a helical span at residues 1–21 (MGSFSIWHWLVVLAIVVLVFG). The disordered stretch occupies residues 41-76 (EGMKGAEEESTPPPPAQQVTGHSIKSEIEEKDQTKV). Basic and acidic residues predominate over residues 64 to 76 (IKSEIEEKDQTKV).

Belongs to the TatA/E family. As to quaternary structure, the Tat system comprises two distinct complexes: a TatABC complex, containing multiple copies of TatA, TatB and TatC subunits, and a separate TatA complex, containing only TatA subunits. Substrates initially bind to the TatABC complex, which probably triggers association of the separate TatA complex to form the active translocon.

It localises to the cell inner membrane. Part of the twin-arginine translocation (Tat) system that transports large folded proteins containing a characteristic twin-arginine motif in their signal peptide across membranes. TatA could form the protein-conducting channel of the Tat system. This chain is Sec-independent protein translocase protein TatA, found in Nitrosomonas europaea (strain ATCC 19718 / CIP 103999 / KCTC 2705 / NBRC 14298).